Consider the following 331-residue polypeptide: uncharacterized protein (331 aa).

This is an uncharacterized protein from Orgyia pseudotsugata (Douglas-fir tussock moth).